A 292-amino-acid polypeptide reads, in one-letter code: NAD kinase (292 aa).

Catalysis depends on aspartate 72, which acts as the Proton acceptor. NAD(+) is bound by residues 72-73 (DG), 146-147 (NE), histidine 157, arginine 174, aspartate 176, and 187-192 (TAYSLS).

Belongs to the NAD kinase family. The cofactor is a divalent metal cation.

Its subcellular location is the cytoplasm. It catalyses the reaction NAD(+) + ATP = ADP + NADP(+) + H(+). In terms of biological role, involved in the regulation of the intracellular balance of NAD and NADP, and is a key enzyme in the biosynthesis of NADP. Catalyzes specifically the phosphorylation on 2'-hydroxyl of the adenosine moiety of NAD to yield NADP. The polypeptide is NAD kinase (Shewanella woodyi (strain ATCC 51908 / MS32)).